Here is a 1174-residue protein sequence, read N- to C-terminus: PR domain zinc finger protein 15 (1174 aa).

The 111-residue stretch at 75-185 (SNLEIRRLDD…AGTELRVWYA (111 aa)) folds into the SET domain. Residues 252–307 (LPAGGQQHEAASEKEPDAPRMEPPTAAESKSIQSVMVTKEPKKKPRRGRKPKASKV) form a disordered region. Residues 261–271 (AASEKEPDAPR) show a composition bias toward basic and acidic residues. The span at 292–304 (PKKKPRRGRKPKA) shows a compositional bias: basic residues. C2H2-type zinc fingers lie at residues 402–424 (HQCG…VRSH) and 434–457 (FKCE…SYKH). Residues 468–486 (YRCGSCGKTFRMESALEFH) form a C2H2-type 3; degenerate zinc finger. 2 C2H2-type zinc fingers span residues 495–517 (FQCE…KKKH) and 522–544 (FACE…QRRH). Residue Lys-552 forms a Glycyl lysine isopeptide (Lys-Gly) (interchain with G-Cter in SUMO2) linkage. 2 C2H2-type zinc fingers span residues 571–593 (SGCP…LLTH) and 598–620 (YTCE…IHVH). The segment at 639 to 658 (IGISSEENDDNSDESADSEP) is disordered. The span at 644-655 (EENDDNSDESAD) shows a compositional bias: acidic residues. 8 C2H2-type zinc fingers span residues 661–684 (YSCK…MEVH), 689–711 (HGCS…MVIH), 725–747 (HPCE…KLIH), 753–775 (HACE…MRVH), 781–803 (YLCA…MKLH), 809–831 (YECK…YKRH), 837–859 (FMCE…KLIH), and 865–888 (WTCS…QLTH). Disordered stretches follow at residues 957 to 1007 (AEGK…GDET) and 1147 to 1174 (LQPP…MYSY). Positions 962–973 (GKAAKRSHKRKQ) are enriched in basic residues. Low complexity predominate over residues 1154–1174 (AAPQQAVQPQVQNEQQQMYSY).

In terms of tissue distribution, expressed in embryonic stem cells (ESCs) (at protein level).

The protein localises to the nucleus. Its function is as follows. Sequence-specific DNA-binding transcriptional regulator. Plays a role as a molecular node in a transcriptional network regulating embryonic development and cell fate decision. Stimulates the expression of upstream key transcriptional activators and repressors of the Wnt/beta-catenin and MAPK/ERK pathways, respectively, that are essential for naive pluripotency and self-renewal maintenance of embryonic stem cells (ESCs). Specifically promotes SPRY1 and RSPO1 transcription activation through recognition and direct binding of a specific DNA sequence in their promoter regions. Also plays a role in induced pluripotent stem cells (iPSCs) reprogramming. Involved in early embryo development. This is PR domain zinc finger protein 15 from Mus musculus (Mouse).